Consider the following 336-residue polypeptide: N-((2S)-2-amino-2-carboxyethyl)-L-glutamate dehydrogenase (336 aa).

The Proton donor/acceptor role is filled by Lys78. Residues Arg122 and Lys242 each coordinate NAD(+).

It belongs to the ornithine cyclodeaminase/mu-crystallin family. As to quaternary structure, homodimer.

It carries out the reaction N-[(2S)-2-amino-2-carboxyethyl]-L-glutamate + NAD(+) + H2O = (S)-2,3-diaminopropanoate + 2-oxoglutarate + NADH + H(+). It participates in siderophore biosynthesis. Functionally, catalyzes the hydrolysis of N-((2S)-2-amino-2-carboxyethyl)-L-glutamate (ACEGA) to form L-2,3-diaminopropionic acid and 2-oxoglutarate. Involved in the biosynthesis of L-2,3-diaminopropionic acid (L-Dap), a precursor of staphyloferrin B and antibiotics. This chain is N-((2S)-2-amino-2-carboxyethyl)-L-glutamate dehydrogenase, found in Staphylococcus aureus (strain NCTC 8325 / PS 47).